The chain runs to 234 residues: UPF0758 protein Smlt0399 (234 aa).

Residues 103-225 form the MPN domain; it reads VGNNPAAVGR…PVSFAERGLL (123 aa). Positions 174, 176, and 187 each coordinate Zn(2+). The JAMM motif signature appears at 174-187; that stretch reads HNHPSGDPEPSSAD.

Belongs to the UPF0758 family.

This chain is UPF0758 protein Smlt0399, found in Stenotrophomonas maltophilia (strain K279a).